Reading from the N-terminus, the 317-residue chain is MIMRFGYVSHAMALWDCSPAKTITFTSFQKLSKQEREDKLYDVTKQNLEHTIRILHYNIAHEIPLYRLSSSIVPLATHPEVEFDYIGAFTPLWRKIGALIKEHNLRVSFHPNQFTLFTSDKPHITTNAITDMTYHYKVLDAIGIADSSYINIHVGGAYGNKEKAIERFHENIKKLPAHIKKQMTLENDDKTYTTAETLSICQKEKIPFVFDYHHHMANLCEEPLEELLPAIFETWSHTNIVPKVHISSPKSKKEFRAHAEYIDLEFIKPFLHVAKKINHNFDIMIESKQKDLAMLQFIQELSSIRGIKRISSSTLQW.

The protein belongs to the uve1/UvsE family.

Component in a DNA repair pathway. Removal of UV LIGHT damaged nucleotides. Recognizes pyrimidine dimers and cleave a phosphodiester bond immediately 5' to the lesion. This is UV DNA damage endonuclease from Bacillus cereus (strain 03BB102).